A 28-amino-acid chain; its full sequence is Nicotinic acetylcholine receptor-binding protein Mnn-3C (28 aa).

Residues Cys3 and Cys24 are joined by a disulfide bond.

Belongs to the three-finger toxin family. Short-chain subfamily. In terms of tissue distribution, expressed by the venom gland.

The protein resides in the secreted. In terms of biological role, binds and may inhibit nicotinic acetylcholine receptors (nAChR). The sequence is that of Nicotinic acetylcholine receptor-binding protein Mnn-3C from Micrurus nigrocinctus (Central American coral snake).